The following is a 98-amino-acid chain: Defensin-like protein 219 (98 aa).

Positions methionine 1–serine 16 are cleaved as a signal peptide. 3 disulfides stabilise this stretch: cysteine 68-cysteine 85, cysteine 71-cysteine 90, and cysteine 75-cysteine 92.

Belongs to the DEFL family.

The protein localises to the secreted. This chain is Defensin-like protein 219, found in Arabidopsis thaliana (Mouse-ear cress).